The sequence spans 474 residues: ATP synthase subunit beta (474 aa).

153 to 160 provides a ligand contact to ATP; sequence GGAGVGKT.

The protein belongs to the ATPase alpha/beta chains family. In terms of assembly, F-type ATPases have 2 components, CF(1) - the catalytic core - and CF(0) - the membrane proton channel. CF(1) has five subunits: alpha(3), beta(3), gamma(1), delta(1), epsilon(1). CF(0) has three main subunits: a(1), b(2) and c(9-12). The alpha and beta chains form an alternating ring which encloses part of the gamma chain. CF(1) is attached to CF(0) by a central stalk formed by the gamma and epsilon chains, while a peripheral stalk is formed by the delta and b chains.

It localises to the cell inner membrane. It carries out the reaction ATP + H2O + 4 H(+)(in) = ADP + phosphate + 5 H(+)(out). Its function is as follows. Produces ATP from ADP in the presence of a proton gradient across the membrane. The catalytic sites are hosted primarily by the beta subunits. The protein is ATP synthase subunit beta of Neorickettsia sennetsu (strain ATCC VR-367 / Miyayama) (Ehrlichia sennetsu).